The chain runs to 132 residues: Protein NrdI (132 aa).

This sequence belongs to the NrdI family.

In terms of biological role, probably involved in ribonucleotide reductase function. This chain is Protein NrdI, found in Bartonella tribocorum (strain CIP 105476 / IBS 506).